Consider the following 331-residue polypeptide: Inactive serine/threonine-protein kinase BKN1 (331 aa).

Gly-2 carries N-myristoyl glycine lipidation. Cys-4 carries the S-palmitoyl cysteine lipid modification. Positions 58-328 constitute a Protein kinase domain; the sequence is DYSVRKFYKG…VLDGLNHIAE (271 aa).

Belongs to the protein kinase superfamily. Ser/Thr protein kinase family. Restricted to stigma in flowers.

Its subcellular location is the cell membrane. The protein resides in the nucleus. Collaboratively with BKN2/SZE2, involved in compatible pollen-stigma interactions. This is Inactive serine/threonine-protein kinase BKN1 from Arabidopsis thaliana (Mouse-ear cress).